The chain runs to 461 residues: MKNTSSSTTLTMNDTIAAIATPSGKGAISIIKISGHNALNILKQLTKKQDFTPRYAYVRDIFSDGVLLDKALVIYFKAPYSFTGEDVCEIQCHGSPLLAQNILQACLNLGARLAKAGEFSKKAFLNHKMDLSEIEASVQLILCEDESVLNALARQLKGELKIFIEEARSDLLKLLASSEVLIDYSEEDIPSDFLKEVSFNLEKQIASFKDLLDFSNAQKQKNKGHALSIVGKPNAGKSSLLNAMLLEERALVSDIKGTTRDTIEEVIELKGHKVRLIDTAGIRESADKIERLGIEKSLKSLENCDIILGVFDLSKPLEKEDFTIIDALNRAKKPCIVVLNKNDLAPKLELEILKSHLKIPYSILETNTLNSKACLKDLGQKISAFFPKLDTQNKLLLTSLAQKTALENAITELQNAKNHLETLELFSYHLLSAIENLNSLTRPYETSQMLDSMFSEFCLGK.

(6S)-5-formyl-5,6,7,8-tetrahydrofolate is bound by residues Lys32, Glu89, and Lys128. Positions 224 to 387 constitute a TrmE-type G domain; it reads GHALSIVGKP…LGQKISAFFP (164 aa). Asn234 provides a ligand contact to K(+). GTP is bound by residues 234–239, 253–259, and 278–281; these read NAGKSS, SDIKGTT, and DTAG. A Mg(2+)-binding site is contributed by Ser238. K(+)-binding residues include Ser253, Ile255, and Thr258. Thr259 contacts Mg(2+). Position 461 (Lys461) interacts with (6S)-5-formyl-5,6,7,8-tetrahydrofolate.

It belongs to the TRAFAC class TrmE-Era-EngA-EngB-Septin-like GTPase superfamily. TrmE GTPase family. As to quaternary structure, homodimer. Heterotetramer of two MnmE and two MnmG subunits. K(+) is required as a cofactor.

It is found in the cytoplasm. Exhibits a very high intrinsic GTPase hydrolysis rate. Involved in the addition of a carboxymethylaminomethyl (cmnm) group at the wobble position (U34) of certain tRNAs, forming tRNA-cmnm(5)s(2)U34. The chain is tRNA modification GTPase MnmE from Helicobacter pylori (strain HPAG1).